Here is a 255-residue protein sequence, read N- to C-terminus: 5-oxoprolinase subunit A (255 aa).

This sequence belongs to the LamB/PxpA family. Forms a complex composed of PxpA, PxpB and PxpC.

The enzyme catalyses 5-oxo-L-proline + ATP + 2 H2O = L-glutamate + ADP + phosphate + H(+). Its function is as follows. Catalyzes the cleavage of 5-oxoproline to form L-glutamate coupled to the hydrolysis of ATP to ADP and inorganic phosphate. This is 5-oxoprolinase subunit A from Nitrobacter hamburgensis (strain DSM 10229 / NCIMB 13809 / X14).